Consider the following 98-residue polypeptide: Co-chaperonin GroES (98 aa).

This sequence belongs to the GroES chaperonin family. In terms of assembly, heptamer of 7 subunits arranged in a ring. Interacts with the chaperonin GroEL.

It localises to the cytoplasm. Functionally, together with the chaperonin GroEL, plays an essential role in assisting protein folding. The GroEL-GroES system forms a nano-cage that allows encapsulation of the non-native substrate proteins and provides a physical environment optimized to promote and accelerate protein folding. GroES binds to the apical surface of the GroEL ring, thereby capping the opening of the GroEL channel. This chain is Co-chaperonin GroES, found in Neorickettsia sennetsu (strain ATCC VR-367 / Miyayama) (Ehrlichia sennetsu).